Here is a 568-residue protein sequence, read N- to C-terminus: Proton-coupled zinc antiporter SLC30A9, mitochondrial (568 aa).

Residues 1-67 constitute a mitochondrion transit peptide; that stretch reads MLPGLAAAAA…IGTLSQVKLY (67 aa). 5 helical membrane passes run 239–259, 314–334, 342–362, 392–412, and 424–444; these read VVMV…LAWI, GVGI…MGLL, LLWA…TLLV, VILL…TCMG, and SLGS…LIYT. Residues 462-466 carry the LXXLL motif motif; sequence LTELL.

Belongs to the cation diffusion facilitator (CDF) transporter (TC 2.A.4) family. SLC30A subfamily. Interacts with GRIP1, ESR1 and AR. Ubiquitously expressed in fetal and adult tissues and cancer cell lines.

The protein resides in the mitochondrion membrane. The protein localises to the nucleus. It localises to the endoplasmic reticulum. The catalysed reaction is Zn(2+)(in) + 2 H(+)(out) = Zn(2+)(out) + 2 H(+)(in). Functionally, mitochondrial proton-coupled zinc ion antiporter mediating the export of zinc from the mitochondria and involved in zinc homeostasis, zinc mobilization as well as mitochondrial morphology and health. In nucleus, functions as a secondary coactivator for nuclear receptors by cooperating with p160 coactivators subtypes. Plays a role in transcriptional activation of Wnt-responsive genes. This chain is Proton-coupled zinc antiporter SLC30A9, mitochondrial, found in Homo sapiens (Human).